A 140-amino-acid polypeptide reads, in one-letter code: Relaxin-3 (140 aa).

The signal sequence occupies residues 1 to 23 (MATRGLLLASWALLGALVLQAEA). Intrachain disulfides connect cysteine 33-cysteine 127, cysteine 45-cysteine 140, and cysteine 126-cysteine 131. A propeptide spans 53–116 (ADILAHDPLG…GSPGVVRGSR (64 aa)) (connecting peptide).

It belongs to the insulin family. In terms of assembly, heterodimer of a B chain and an A chain linked by two disulfide bonds. In terms of tissue distribution, highly abundant expression is detected in neurons within the ventomedial dorsal tegmental nucleus and the laterally central gray alpha of the pons. Also detected at much lower levels within the hippocampus.

The protein resides in the secreted. May play a role in neuropeptide signaling processes. Ligand for LGR7, relaxin-3 receptor-1 and relaxin-3 receptor-2. This Rattus norvegicus (Rat) protein is Relaxin-3 (Rln3).